A 610-amino-acid polypeptide reads, in one-letter code: UvrABC system protein C (610 aa).

The GIY-YIG domain maps to 16–94 (SQPGVYRMYD…IKLYQPRYNV (79 aa)). A UVR domain is found at 204–239 (QQVLHQLIERMENASKALNFEEAARIRDQIQAVRRV).

This sequence belongs to the UvrC family. As to quaternary structure, interacts with UvrB in an incision complex.

It is found in the cytoplasm. Functionally, the UvrABC repair system catalyzes the recognition and processing of DNA lesions. UvrC both incises the 5' and 3' sides of the lesion. The N-terminal half is responsible for the 3' incision and the C-terminal half is responsible for the 5' incision. This is UvrABC system protein C from Serratia proteamaculans (strain 568).